The sequence spans 345 residues: Adenine deaminase (345 aa).

The Zn(2+) site is built by histidine 20, histidine 22, and histidine 204. The Proton donor role is filled by glutamate 207. Zn(2+) is bound at residue aspartate 285. Residue aspartate 286 coordinates substrate.

It belongs to the metallo-dependent hydrolases superfamily. Adenosine and AMP deaminases family. Adenine deaminase type 2 subfamily. The cofactor is Zn(2+).

The enzyme catalyses adenine + H2O + H(+) = hypoxanthine + NH4(+). In terms of biological role, catalyzes the hydrolytic deamination of adenine to hypoxanthine. Plays an important role in the purine salvage pathway and in nitrogen catabolism. In Ralstonia nicotianae (strain ATCC BAA-1114 / GMI1000) (Ralstonia solanacearum), this protein is Adenine deaminase.